The chain runs to 422 residues: UDP-N-acetyl-D-glucosamine 6-dehydrogenase (422 aa).

5 residues coordinate NAD(+): valine 14, aspartate 32, arginine 37, threonine 83, and threonine 118. Residue cysteine 258 is the Nucleophile of the active site. Arginine 329 lines the NAD(+) pocket.

This sequence belongs to the UDP-glucose/GDP-mannose dehydrogenase family.

The catalysed reaction is UDP-N-acetyl-alpha-D-glucosamine + 2 NAD(+) + H2O = UDP-2-acetamido-2-deoxy-alpha-D-glucuronate + 2 NADH + 3 H(+). It participates in bacterial outer membrane biogenesis; LPS O-antigen biosynthesis. With respect to regulation, requires either potassium or ammonium-containing salts for activity. Its function is as follows. Dehydrogenase required for the biosynthesis of the B-band O antigen of serotype O6 lipopolysaccharide. Is also required for flagellin glycosylation. Catalyzes the conversion of UDP-N-acetylglucosamine (UDP-GlcNAc) to UDP-N-acetylglucosaminuronic acid (UDP-GlcNAcA). Can also catalyze the conversion of UDP-N-acetyl-galactosamine (UDP-GalNAc) to UDP-N-acetylgalactosaminuronic acid (UDP-GalNAcA), with low efficiency. Can use NAD(+) or NADP(+), with a preference for NAD(+). This Pseudomonas aeruginosa protein is UDP-N-acetyl-D-glucosamine 6-dehydrogenase.